Reading from the N-terminus, the 524-residue chain is Glucose-6-phosphate isomerase (524 aa).

Glu-346 functions as the Proton donor in the catalytic mechanism. Active-site residues include His-377 and Lys-492.

It belongs to the GPI family.

The protein localises to the cytoplasm. The catalysed reaction is alpha-D-glucose 6-phosphate = beta-D-fructose 6-phosphate. It participates in carbohydrate biosynthesis; gluconeogenesis. Its pathway is carbohydrate degradation; glycolysis; D-glyceraldehyde 3-phosphate and glycerone phosphate from D-glucose: step 2/4. Catalyzes the reversible isomerization of glucose-6-phosphate to fructose-6-phosphate. The polypeptide is Glucose-6-phosphate isomerase (Chlamydia trachomatis serovar A (strain ATCC VR-571B / DSM 19440 / HAR-13)).